A 313-amino-acid polypeptide reads, in one-letter code: Ribosomal RNA small subunit methyltransferase H (313 aa).

Residues 35–37 (GGH), Asp-55, Phe-80, Asp-102, and Gln-109 contribute to the S-adenosyl-L-methionine site.

Belongs to the methyltransferase superfamily. RsmH family.

It is found in the cytoplasm. The catalysed reaction is cytidine(1402) in 16S rRNA + S-adenosyl-L-methionine = N(4)-methylcytidine(1402) in 16S rRNA + S-adenosyl-L-homocysteine + H(+). Functionally, specifically methylates the N4 position of cytidine in position 1402 (C1402) of 16S rRNA. This is Ribosomal RNA small subunit methyltransferase H from Shewanella baltica (strain OS223).